The sequence spans 105 residues: Nitrogen fixation nifHD region GlnB-like protein 1 (105 aa).

This sequence belongs to the P(II) protein family.

In terms of biological role, could be involved in the regulation of nitrogen fixation. The protein is Nitrogen fixation nifHD region GlnB-like protein 1 (glnBA) of Methanothermobacter marburgensis (strain ATCC BAA-927 / DSM 2133 / JCM 14651 / NBRC 100331 / OCM 82 / Marburg) (Methanobacterium thermoautotrophicum).